The chain runs to 165 residues: Phosphopantetheine adenylyltransferase (165 aa).

Residue threonine 9 coordinates substrate. Residues 9-10 (TF) and histidine 17 contribute to the ATP site. Substrate contacts are provided by lysine 41, leucine 78, and arginine 92. Residues 93-95 (GLR), glutamate 103, and 128-134 (RQAIASK) each bind ATP.

It belongs to the bacterial CoaD family. Homohexamer. It depends on Mg(2+) as a cofactor.

The protein resides in the cytoplasm. The enzyme catalyses (R)-4'-phosphopantetheine + ATP + H(+) = 3'-dephospho-CoA + diphosphate. It participates in cofactor biosynthesis; coenzyme A biosynthesis; CoA from (R)-pantothenate: step 4/5. In terms of biological role, reversibly transfers an adenylyl group from ATP to 4'-phosphopantetheine, yielding dephospho-CoA (dPCoA) and pyrophosphate. This chain is Phosphopantetheine adenylyltransferase, found in Ruegeria pomeroyi (strain ATCC 700808 / DSM 15171 / DSS-3) (Silicibacter pomeroyi).